The following is a 446-amino-acid chain: Methylenetetrahydrofolate--tRNA-(uracil-5-)-methyltransferase TrmFO (446 aa).

8-13 (GGGLAG) provides a ligand contact to FAD.

The protein belongs to the MnmG family. TrmFO subfamily. FAD serves as cofactor.

It is found in the cytoplasm. It carries out the reaction uridine(54) in tRNA + (6R)-5,10-methylene-5,6,7,8-tetrahydrofolate + NADH + H(+) = 5-methyluridine(54) in tRNA + (6S)-5,6,7,8-tetrahydrofolate + NAD(+). The catalysed reaction is uridine(54) in tRNA + (6R)-5,10-methylene-5,6,7,8-tetrahydrofolate + NADPH + H(+) = 5-methyluridine(54) in tRNA + (6S)-5,6,7,8-tetrahydrofolate + NADP(+). Its function is as follows. Catalyzes the folate-dependent formation of 5-methyl-uridine at position 54 (M-5-U54) in all tRNAs. This is Methylenetetrahydrofolate--tRNA-(uracil-5-)-methyltransferase TrmFO from Zymomonas mobilis subsp. mobilis (strain ATCC 31821 / ZM4 / CP4).